The chain runs to 375 residues: Putative fimbrium tip subunit Fim1C (375 aa).

The N-terminal stretch at 1-16 (MKLLANIFLSGLAILA) is a signal peptide. Residue Cys17 is the site of N-palmitoyl cysteine attachment. A lipid anchor (S-diacylglycerol cysteine) is attached at Cys17. A propeptide spanning residues 17 to 47 (CVSCSKDEDPVLPLEGAKLSVAVKASGTATK) is cleaved from the precursor.

The protein belongs to the bacteroidetes fimbrillin superfamily. FimA/Mfa1 family. May be part of the fimbrial tip.

The protein resides in the fimbrium. It localises to the cell outer membrane. Its function is as follows. Probably a component of the fimbrium tip. Fimbriae are filamentous appendages on the cell surface that mediate cell adhesion and biofilm formation. In Parabacteroides distasonis (strain ATCC 8503 / DSM 20701 / CIP 104284 / JCM 5825 / NCTC 11152), this protein is Putative fimbrium tip subunit Fim1C.